Consider the following 185-residue polypeptide: uncharacterized protein (185 aa).

It belongs to the EUO family.

This is an uncharacterized protein from Chlamydia muridarum (strain MoPn / Nigg).